A 94-amino-acid polypeptide reads, in one-letter code: Co-chaperonin GroES (94 aa).

This sequence belongs to the GroES chaperonin family. Heptamer of 7 subunits arranged in a ring. Interacts with the chaperonin GroEL.

The protein localises to the cytoplasm. Functionally, together with the chaperonin GroEL, plays an essential role in assisting protein folding. The GroEL-GroES system forms a nano-cage that allows encapsulation of the non-native substrate proteins and provides a physical environment optimized to promote and accelerate protein folding. GroES binds to the apical surface of the GroEL ring, thereby capping the opening of the GroEL channel. The chain is Co-chaperonin GroES from Tetragenococcus halophilus (Pediococcus halophilus).